Consider the following 269-residue polypeptide: Formamidopyrimidine-DNA glycosylase (269 aa).

Catalysis depends on P2, which acts as the Schiff-base intermediate with DNA. The Proton donor role is filled by E3. K57 serves as the catalytic Proton donor; for beta-elimination activity. DNA-binding residues include H90, R109, and K150. The FPG-type zinc finger occupies 235-269 (QVYGRKGEPCRVCGTPIVATKHAQRATFYCRHCQK). The active-site Proton donor; for delta-elimination activity is the R259.

Belongs to the FPG family. In terms of assembly, monomer. Requires Zn(2+) as cofactor.

It carries out the reaction Hydrolysis of DNA containing ring-opened 7-methylguanine residues, releasing 2,6-diamino-4-hydroxy-5-(N-methyl)formamidopyrimidine.. The enzyme catalyses 2'-deoxyribonucleotide-(2'-deoxyribose 5'-phosphate)-2'-deoxyribonucleotide-DNA = a 3'-end 2'-deoxyribonucleotide-(2,3-dehydro-2,3-deoxyribose 5'-phosphate)-DNA + a 5'-end 5'-phospho-2'-deoxyribonucleoside-DNA + H(+). Functionally, involved in base excision repair of DNA damaged by oxidation or by mutagenic agents. Acts as a DNA glycosylase that recognizes and removes damaged bases. Has a preference for oxidized purines, such as 7,8-dihydro-8-oxoguanine (8-oxoG). Has AP (apurinic/apyrimidinic) lyase activity and introduces nicks in the DNA strand. Cleaves the DNA backbone by beta-delta elimination to generate a single-strand break at the site of the removed base with both 3'- and 5'-phosphates. This Salmonella dublin (strain CT_02021853) protein is Formamidopyrimidine-DNA glycosylase.